Here is a 370-residue protein sequence, read N- to C-terminus: Small ribosomal subunit biogenesis GTPase RsgA (370 aa).

Positions 97 to 255 (QTQLDRPPIA…LADTPGFNQP (159 aa)) constitute a CP-type G domain. GTP contacts are provided by residues 146–149 (NKSD) and 197–205 (GPSGVGKSS). Residues Cys-280, Cys-285, His-287, and Cys-293 each coordinate Zn(2+). The segment at 328 to 370 (TLKLKTKGKGQSQYEPKLESKKYRRTSRRTQVQGLQDLYQEEE) is disordered.

It belongs to the TRAFAC class YlqF/YawG GTPase family. RsgA subfamily. As to quaternary structure, monomer. Associates with 30S ribosomal subunit, binds 16S rRNA. Zn(2+) is required as a cofactor.

Its subcellular location is the cytoplasm. One of several proteins that assist in the late maturation steps of the functional core of the 30S ribosomal subunit. Helps release RbfA from mature subunits. May play a role in the assembly of ribosomal proteins into the subunit. Circularly permuted GTPase that catalyzes slow GTP hydrolysis, GTPase activity is stimulated by the 30S ribosomal subunit. The chain is Small ribosomal subunit biogenesis GTPase RsgA from Trichormus variabilis (strain ATCC 29413 / PCC 7937) (Anabaena variabilis).